A 50-amino-acid polypeptide reads, in one-letter code: Large ribosomal subunit protein bL33B (50 aa).

Belongs to the bacterial ribosomal protein bL33 family.

This is Large ribosomal subunit protein bL33B from Metamycoplasma arthritidis (strain 158L3-1) (Mycoplasma arthritidis).